A 222-amino-acid chain; its full sequence is Transmembrane reductase CYB561D2 (222 aa).

Over 2 to 17 the chain is Cytoplasmic; that stretch reads ALSVETESHIYRALRT. The Cytochrome b561 domain maps to 14-217; the sequence is ALRTASGAAA…NQVSNAYLYR (204 aa). Residues 18–38 form a helical membrane-spanning segment; sequence ASGAAAHLVALGFTIFVAVLA. Residues 39 to 46 lie on the Lumenal side of the membrane; sequence RPGSSLFS. Residues 47–67 traverse the membrane as a helical segment; it reads WHPVLMSLAFSFLMTEALLMF. A heme b-binding site is contributed by H48. Residues 68–85 lie on the Cytoplasmic side of the membrane; sequence SPESSLLRSLSRKVRARC. Heme b-binding residues include H86 and H120. A helical transmembrane segment spans residues 86–106; the sequence is HWVLQLLALLCALLGLGLVIL. The Lumenal segment spans residues 107–122; the sequence is HKEQLGKAHLTTRHGQ. Residues 123-143 form a helical membrane-spanning segment; that stretch reads AGLLAVLWAGLQCSGGMGLLY. Topologically, residues 144-162 are cytoplasmic; sequence PKLLPRWPLAKLKLYHATS. Heme b is bound at residue H159. A helical membrane pass occupies residues 163-183; sequence GLVGYLLGSASLLLGMFSLWF. Over 184 to 186 the chain is Lumenal; the sequence is TAT. Residues 187-207 traverse the membrane as a helical segment; that stretch reads VTGGAWYLAVLCPILTSLVIM. The Cytoplasmic segment spans residues 208-222; it reads NQVSNAYLYRKRIQP.

Heme b serves as cofactor. Highly expressed in the brain, lung, liver, and kidney. Moderately expressed in the heart, placenta, skeletal muscle, and pancreas.

Its subcellular location is the endoplasmic reticulum membrane. The protein localises to the cytoplasmic vesicle membrane. It carries out the reaction monodehydro-L-ascorbate radical(out) + L-ascorbate(in) = monodehydro-L-ascorbate radical(in) + L-ascorbate(out). The enzyme catalyses Fe(3+)(out) + L-ascorbate(in) = monodehydro-L-ascorbate radical(in) + Fe(2+)(out) + H(+). Functionally, transmembrane reductase that may use ascorbate as an electron donor in the cytoplasm and transfer electrons across endoplasmic reticulum membranes to reduce monodehydro-L-ascorbate radical and iron cations Fe(3+) in the lumen of that compartment. The sequence is that of Transmembrane reductase CYB561D2 from Mus musculus (Mouse).